Reading from the N-terminus, the 333-residue chain is L-lactate dehydrogenase B chain (333 aa).

NAD(+)-binding positions include 29–57 (GQVGMACAISILGKGLCDELALVDVLEDK) and Arg-99. Residues Arg-106, Asn-138, and Arg-169 each contribute to the substrate site. Asn-138 is an NAD(+) binding site. His-193 serves as the catalytic Proton acceptor. A substrate-binding site is contributed by Thr-248.

It belongs to the LDH/MDH superfamily. LDH family. As to quaternary structure, homotetramer.

It is found in the cytoplasm. The enzyme catalyses (S)-lactate + NAD(+) = pyruvate + NADH + H(+). It participates in fermentation; pyruvate fermentation to lactate; (S)-lactate from pyruvate: step 1/1. Functionally, interconverts simultaneously and stereospecifically pyruvate and lactate with concomitant interconversion of NADH and NAD(+). The polypeptide is L-lactate dehydrogenase B chain (LDHB) (Gallus gallus (Chicken)).